Here is a 267-residue protein sequence, read N- to C-terminus: Proteasome assembly chaperone 2 (267 aa).

The protein belongs to the PSMG2 family. In terms of assembly, component of the 20S proteasome chaperone. Forms a heterodimer with PBA1 that binds to proteasome precursors.

The protein localises to the cytoplasm. Its function is as follows. Involved in 20S proteasome assembly. Required for maximal proteasome activity. Affects the chymotrypsin-like activity of the proteasome. Can be degraded by the proteasome. Involved in the endoplasmic reticulum-associated degradation (ERAD). The protein is Proteasome assembly chaperone 2 (ADD66) of Saccharomyces cerevisiae (strain ATCC 204508 / S288c) (Baker's yeast).